The following is a 733-amino-acid chain: Polyribonucleotide nucleotidyltransferase (733 aa).

Mg(2+)-binding residues include aspartate 503 and aspartate 509. The 60-residue stretch at 570 to 629 (PRLTTIQIPVDAIGMVIGKGGETIRSITEETGAEINIDDDGTVTIACSSPEATKAAVETI) folds into the KH domain. The S1 motif domain maps to 639–713 (GTIYMGKVRD…GKTKFALSIK (75 aa)).

Belongs to the polyribonucleotide nucleotidyltransferase family. It depends on Mg(2+) as a cofactor.

Its subcellular location is the cytoplasm. The enzyme catalyses RNA(n+1) + phosphate = RNA(n) + a ribonucleoside 5'-diphosphate. Functionally, involved in mRNA degradation. Catalyzes the phosphorolysis of single-stranded polyribonucleotides processively in the 3'- to 5'-direction. This Chlorobaculum tepidum (strain ATCC 49652 / DSM 12025 / NBRC 103806 / TLS) (Chlorobium tepidum) protein is Polyribonucleotide nucleotidyltransferase.